The primary structure comprises 231 residues: RNA pyrophosphohydrolase (231 aa).

The region spanning 6 to 149 (GFRPNVGIIL…KRDVYQLALT (144 aa)) is the Nudix hydrolase domain. The Nudix box signature appears at 38 to 59 (GGIKYGETPVQAMYRELHEETG). Positions 157–190 (RPQPRTERPGGHHHGQRYPRMASSVNAPPGASMA) are disordered.

The protein belongs to the Nudix hydrolase family. RppH subfamily. It depends on a divalent metal cation as a cofactor.

In terms of biological role, accelerates the degradation of transcripts by removing pyrophosphate from the 5'-end of triphosphorylated RNA, leading to a more labile monophosphorylated state that can stimulate subsequent ribonuclease cleavage. The protein is RNA pyrophosphohydrolase of Paraburkholderia phymatum (strain DSM 17167 / CIP 108236 / LMG 21445 / STM815) (Burkholderia phymatum).